A 231-amino-acid polypeptide reads, in one-letter code: GFP-like fluorescent chromoprotein FP538 (231 aa).

Phenylalanine amide; atypical is present on phenylalanine 65. Positions 66–68 (KYG) form a cross-link, 2-tetrahydro-2-pyridyl-5-imidazolinone (Lys-Gly). Tyrosine 67 is modified (2,3-didehydrotyrosine).

The protein belongs to the GFP family. As to quaternary structure, homotetramer. Contains a chromophore consisting of modified amino acid residues. The chromophore is formed by autocatalytic backbone condensation between Xaa-N and Gly-(N+2), and oxidation of Tyr-(N+1) to didehydrotyrosine. In addition, the residue N lysine undergoes cyclization. The alpha-amino nitrogen is replaced by the epsilon-amino nitrogen, the peptide chain is broken, residue N-1 is released as an amide, and a double bond is formed between the alpha-carbon and the nitrogen so that a tetrahydropyridine ring results. Maturation of the chromophore requires nothing other than molecular oxygen. Tentacle and oral disk.

In terms of biological role, pigment protein that is yellow in color. The chain is GFP-like fluorescent chromoprotein FP538 from Zoanthus sp. (Green polyp).